The primary structure comprises 213 residues: ATP phosphoribosyltransferase (213 aa).

The protein belongs to the ATP phosphoribosyltransferase family. Short subfamily. As to quaternary structure, heteromultimer composed of HisG and HisZ subunits.

Its subcellular location is the cytoplasm. The enzyme catalyses 1-(5-phospho-beta-D-ribosyl)-ATP + diphosphate = 5-phospho-alpha-D-ribose 1-diphosphate + ATP. Its pathway is amino-acid biosynthesis; L-histidine biosynthesis; L-histidine from 5-phospho-alpha-D-ribose 1-diphosphate: step 1/9. Its function is as follows. Catalyzes the condensation of ATP and 5-phosphoribose 1-diphosphate to form N'-(5'-phosphoribosyl)-ATP (PR-ATP). Has a crucial role in the pathway because the rate of histidine biosynthesis seems to be controlled primarily by regulation of HisG enzymatic activity. The polypeptide is ATP phosphoribosyltransferase (Variovorax paradoxus (strain S110)).